The following is a 203-amino-acid chain: Small ribosomal subunit protein uS4 (203 aa).

Positions 92–152 constitute an S4 RNA-binding domain; that stretch reads LRLATVLLRA…EKSRKLVPFI (61 aa).

It belongs to the universal ribosomal protein uS4 family. Part of the 30S ribosomal subunit. Contacts protein S5. The interaction surface between S4 and S5 is involved in control of translational fidelity.

Its function is as follows. One of the primary rRNA binding proteins, it binds directly to 16S rRNA where it nucleates assembly of the body of the 30S subunit. In terms of biological role, with S5 and S12 plays an important role in translational accuracy. The sequence is that of Small ribosomal subunit protein uS4 from Thermobifida fusca (strain YX).